The following is a 104-amino-acid chain: L-rhamnose mutarotase (104 aa).

Tyrosine 18 contacts substrate. The active-site Proton donor is histidine 22. Residues tyrosine 41 and 76 to 77 (WW) contribute to the substrate site.

Belongs to the rhamnose mutarotase family. Homodimer.

The protein localises to the cytoplasm. It carries out the reaction alpha-L-rhamnose = beta-L-rhamnose. Its pathway is carbohydrate metabolism; L-rhamnose metabolism. Functionally, involved in the anomeric conversion of L-rhamnose. This chain is L-rhamnose mutarotase, found in Escherichia coli O1:K1 / APEC.